The following is a 277-amino-acid chain: Undecaprenyl-diphosphatase (277 aa).

Transmembrane regions (helical) follow at residues 53–73 (LGAI…VILG), 85–105 (VNLL…ADLI), 108–128 (WLFN…VMLW), 183–203 (AATE…AAYS), 215–235 (GDLP…MLAV), and 250–270 (FAWY…LGVV).

This sequence belongs to the UppP family.

The protein localises to the cell inner membrane. The enzyme catalyses di-trans,octa-cis-undecaprenyl diphosphate + H2O = di-trans,octa-cis-undecaprenyl phosphate + phosphate + H(+). Its function is as follows. Catalyzes the dephosphorylation of undecaprenyl diphosphate (UPP). Confers resistance to bacitracin. The sequence is that of Undecaprenyl-diphosphatase from Azotobacter vinelandii (strain DJ / ATCC BAA-1303).